The sequence spans 326 residues: ELMO domain-containing protein 1 (326 aa).

Positions 133–306 constitute an ELMO domain; it reads QHEEMLLKLW…KFRKRIIKQL (174 aa).

In terms of biological role, acts as a GTPase-activating protein (GAP) toward guanine nucleotide exchange factors like ARL2, ARL3, ARF1 and ARF6, but not for GTPases outside the Arf family. The protein is ELMO domain-containing protein 1 (ELMOD1) of Bos taurus (Bovine).